Reading from the N-terminus, the 269-residue chain is Phosphonoacetaldehyde hydrolase (269 aa).

Asp-10 serves as the catalytic Nucleophile. Positions 10 and 12 each coordinate Mg(2+). Catalysis depends on Lys-52, which acts as the Schiff-base intermediate with substrate. Asp-186 serves as a coordination point for Mg(2+).

Belongs to the HAD-like hydrolase superfamily. PhnX family. Homodimer. Mg(2+) serves as cofactor.

It carries out the reaction phosphonoacetaldehyde + H2O = acetaldehyde + phosphate + H(+). Its function is as follows. Involved in phosphonate degradation. The chain is Phosphonoacetaldehyde hydrolase (phnX) from Salmonella typhimurium (strain LT2 / SGSC1412 / ATCC 700720).